The sequence spans 108 residues: U-scoloptoxin(16)-Sm1a (108 aa).

The N-terminal stretch at 1–19 (MNLFLVLFVFSFSVSQFFA) is a signal peptide.

The protein belongs to the scoloptoxin-16 family. In terms of processing, contains 4 disulfide bonds. Expressed by the venom gland.

Its subcellular location is the secreted. The sequence is that of U-scoloptoxin(16)-Sm1a from Scolopendra morsitans (Tanzanian blue ringleg centipede).